The following is a 248-amino-acid chain: N-acylneuraminate-9-phosphatase (248 aa).

Position 12 (Asp-12) interacts with Mg(2+). 5 residues coordinate phosphate: Leu-13, Asp-14, Thr-131, Asn-132, and Lys-164. Position 14 (Asp-14) interacts with Mg(2+). Residue Asp-189 participates in Mg(2+) binding.

It belongs to the HAD-like hydrolase superfamily. NANP family. Mg(2+) is required as a cofactor.

The catalysed reaction is N-acetylneuraminate 9-phosphate + H2O = N-acetylneuraminate + phosphate. The enzyme catalyses N-glycoloylneuraminate 9-phosphate + H2O = N-glycoloylneuraminate + phosphate. The protein operates within amino-sugar metabolism; N-acetylneuraminate biosynthesis. Inhibited by calcium. Inhibited by vanadate, sodium orthovanadate and phosphonate. Catalyzes the dephosphorylation of N-acylneuraminate 9-phosphate (Neu5Ac-9-P) to N-acetylneuraminic acid (Neu5Ac or sialic acid). Can also use N-glycoloylneuraminate 9-phosphate as substrate. The sequence is that of N-acylneuraminate-9-phosphatase from Homo sapiens (Human).